We begin with the raw amino-acid sequence, 418 residues long: NADH-quinone oxidoreductase subunit D (418 aa).

It belongs to the complex I 49 kDa subunit family. As to quaternary structure, NDH-1 is composed of 14 different subunits. Subunits NuoB, C, D, E, F, and G constitute the peripheral sector of the complex.

The protein localises to the cell inner membrane. The catalysed reaction is a quinone + NADH + 5 H(+)(in) = a quinol + NAD(+) + 4 H(+)(out). NDH-1 shuttles electrons from NADH, via FMN and iron-sulfur (Fe-S) centers, to quinones in the respiratory chain. The immediate electron acceptor for the enzyme in this species is believed to be ubiquinone. Couples the redox reaction to proton translocation (for every two electrons transferred, four hydrogen ions are translocated across the cytoplasmic membrane), and thus conserves the redox energy in a proton gradient. This is NADH-quinone oxidoreductase subunit D from Neisseria meningitidis serogroup B (strain ATCC BAA-335 / MC58).